We begin with the raw amino-acid sequence, 510 residues long: Leucine-rich repeat protein lrrA (510 aa).

20 LRR repeats span residues 14 to 34 (YRKR…PPTI), 35 to 59 (GALQ…IGKL), 60 to 82 (SKVE…IGSL), 84 to 106 (TLKQ…NIGA), 107 to 130 (LKNL…ISNC), 132 to 152 (ALEY…EFGK), 153 to 176 (LYNL…ISGW), 177 to 200 (VKLE…CLLG), 202 to 222 (LSTL…LSSM), 224 to 245 (SLTN…LSNL), 246 to 270 (RQLK…LLSE), 272 to 292 (IELD…IATL), 293 to 315 (INLQ…VGNL), 316 to 340 (INLQ…IGKL), 341 to 363 (VNLK…IASM), 365 to 386 (ALKE…IGEL), 387 to 408 (SGLT…SFGN), 410 to 432 (SELQ…LDGL), 433 to 458 (KSCT…LIGL), and 460 to 478 (ILDV…IVMK).

Its subcellular location is the cytoplasm. Functionally, involved in cytoskeleton remodeling, which is needed for normal chemotactic aggregation and efficient cell sorting during multicellular morphogenesis. In Dictyostelium discoideum (Social amoeba), this protein is Leucine-rich repeat protein lrrA (lrrA).